The primary structure comprises 196 residues: dTTP/UTP pyrophosphatase (196 aa).

Aspartate 72 serves as the catalytic Proton acceptor.

Belongs to the Maf family. YhdE subfamily. It depends on a divalent metal cation as a cofactor.

The protein localises to the cytoplasm. It carries out the reaction dTTP + H2O = dTMP + diphosphate + H(+). The catalysed reaction is UTP + H2O = UMP + diphosphate + H(+). In terms of biological role, nucleoside triphosphate pyrophosphatase that hydrolyzes dTTP and UTP. May have a dual role in cell division arrest and in preventing the incorporation of modified nucleotides into cellular nucleic acids. The protein is dTTP/UTP pyrophosphatase of Chlamydia trachomatis serovar A (strain ATCC VR-571B / DSM 19440 / HAR-13).